The chain runs to 729 residues: Fatty acid oxidation complex subunit alpha (729 aa).

The tract at residues 1 to 189 (MLYKGDTLYL…KIGLVDGVVK (189 aa)) is enoyl-CoA hydratase/isomerase. Aspartate 296 contacts substrate. Residues 311–729 (ETPKQAAVLG…ARPVGDLKTA (419 aa)) are 3-hydroxyacyl-CoA dehydrogenase. NAD(+) contacts are provided by residues methionine 324, aspartate 343, 400-402 (VVE), lysine 407, and serine 429. The active-site For 3-hydroxyacyl-CoA dehydrogenase activity is histidine 450. Asparagine 453 contributes to the NAD(+) binding site. Residues asparagine 500 and tyrosine 660 each contribute to the substrate site. The interval 708–729 (RHNEPYYPPVEPARPVGDLKTA) is disordered.

The protein in the N-terminal section; belongs to the enoyl-CoA hydratase/isomerase family. In the C-terminal section; belongs to the 3-hydroxyacyl-CoA dehydrogenase family. Heterotetramer of two alpha chains (FadB) and two beta chains (FadA).

It catalyses the reaction a (3S)-3-hydroxyacyl-CoA + NAD(+) = a 3-oxoacyl-CoA + NADH + H(+). The catalysed reaction is a (3S)-3-hydroxyacyl-CoA = a (2E)-enoyl-CoA + H2O. The enzyme catalyses a 4-saturated-(3S)-3-hydroxyacyl-CoA = a (3E)-enoyl-CoA + H2O. It carries out the reaction (3S)-3-hydroxybutanoyl-CoA = (3R)-3-hydroxybutanoyl-CoA. It catalyses the reaction a (3Z)-enoyl-CoA = a 4-saturated (2E)-enoyl-CoA. The catalysed reaction is a (3E)-enoyl-CoA = a 4-saturated (2E)-enoyl-CoA. It participates in lipid metabolism; fatty acid beta-oxidation. In terms of biological role, involved in the aerobic and anaerobic degradation of long-chain fatty acids via beta-oxidation cycle. Catalyzes the formation of 3-oxoacyl-CoA from enoyl-CoA via L-3-hydroxyacyl-CoA. It can also use D-3-hydroxyacyl-CoA and cis-3-enoyl-CoA as substrate. The polypeptide is Fatty acid oxidation complex subunit alpha (Escherichia coli (strain K12 / MC4100 / BW2952)).